A 141-amino-acid polypeptide reads, in one-letter code: Putative pre-16S rRNA nuclease (141 aa).

The protein belongs to the YqgF nuclease family.

It is found in the cytoplasm. Could be a nuclease involved in processing of the 5'-end of pre-16S rRNA. The protein is Putative pre-16S rRNA nuclease of Pseudomonas putida (strain ATCC 47054 / DSM 6125 / CFBP 8728 / NCIMB 11950 / KT2440).